The primary structure comprises 200 residues: NADH-quinone oxidoreductase subunit C (200 aa).

This sequence belongs to the complex I 30 kDa subunit family. As to quaternary structure, NDH-1 is composed of 14 different subunits. Subunits NuoB, C, D, E, F, and G constitute the peripheral sector of the complex.

Its subcellular location is the cell inner membrane. The catalysed reaction is a quinone + NADH + 5 H(+)(in) = a quinol + NAD(+) + 4 H(+)(out). Its function is as follows. NDH-1 shuttles electrons from NADH, via FMN and iron-sulfur (Fe-S) centers, to quinones in the respiratory chain. The immediate electron acceptor for the enzyme in this species is believed to be ubiquinone. Couples the redox reaction to proton translocation (for every two electrons transferred, four hydrogen ions are translocated across the cytoplasmic membrane), and thus conserves the redox energy in a proton gradient. In Burkholderia multivorans (strain ATCC 17616 / 249), this protein is NADH-quinone oxidoreductase subunit C.